The sequence spans 267 residues: Putative transcription factor Ovo-like 1 (267 aa).

4 C2H2-type zinc fingers span residues 118-140 (FTCR…MKCH), 146-168 (HLCT…VRTH), 174-197 (YKCS…KKIH), and 213-235 (YVCE…LKEH).

As to expression, expressed in fetal kidney, and also in adult pancreas and placenta. Not expressed in intestine, peripheral blood lymphocytes and ovary.

The protein localises to the nucleus. Its function is as follows. Putative transcription factor. Involved in hair formation and spermatogenesis. May function in the differentiation and/or maintenance of the urogenital system. The polypeptide is Putative transcription factor Ovo-like 1 (OVOL1) (Homo sapiens (Human)).